Reading from the N-terminus, the 555-residue chain is Solute carrier family 22 member 2 (555 aa).

Residues 1 to 21 (MPTTVDDVLEHGGEFHFFQKQ) lie on the Cytoplasmic side of the membrane. The chain crosses the membrane as a helical span at residues 22–42 (MFFLLALLSATFTPIYVGIVF). Residues 43 to 150 (LGFTPDHRCR…LVCANSWMLD (108 aa)) lie on the Extracellular side of the membrane. N72 carries N-linked (GlcNAc...) asparagine glycosylation. Residues 151–171 (LFQASVNVGFFFGSVSIGYIA) traverse the membrane as a helical segment. The Cytoplasmic segment spans residues 172-177 (DRFGRK). Residues 178–198 (LCLLTTVLINAAAGVLMAISP) form a helical membrane-spanning segment. Topologically, residues 199–210 (TYTWMLIFRLIQ) are extracellular. A helical transmembrane segment spans residues 211-231 (GLVSKAGWLIGYILITEFVGR). Residues 232 to 238 (RYRRTVG) lie on the Cytoplasmic side of the membrane. A helical membrane pass occupies residues 239 to 259 (IFYQVAYTVGLLVLAGVAYAL). Residues 260 to 263 (PHWR) lie on the Extracellular side of the membrane. The helical transmembrane segment at 264 to 284 (WLQFTVTLPNFFFLLYYWCIP) threads the bilayer. A Proline-rich sequence motif is present at residues 284-288 (PESPR). Residues 285-348 (ESPRWLISQN…VRTPQIRKHT (64 aa)) lie on the Cytoplasmic side of the membrane. A helical transmembrane segment spans residues 349–369 (MILMYNWFTSSVLYQGLIMHM). Residues 370 to 375 (GLAGDN) lie on the Extracellular side of the membrane. The helical transmembrane segment at 376–396 (IYLDFFYSALVEFPAAFMIIV) threads the bilayer. Residues 397-404 (TIDRIGRR) lie on the Cytoplasmic side of the membrane. A helical membrane pass occupies residues 405–425 (YPWAASNMVAGAACLASVFIP). Residues 426-432 (GDLQWLK) lie on the Extracellular side of the membrane. A helical membrane pass occupies residues 433–453 (IIISCLGRMGITMAYEIVRLV). Over 454–464 (NAELYPTFIRN) the chain is Cytoplasmic. The helical transmembrane segment at 465–485 (LGVHICSSMCDIGGIITPFLV) threads the bilayer. Residues 486-494 (YRLTNIWLE) are Extracellular-facing. Residues 495-515 (LPLMVFGVLGLVAGGLVLLLP) traverse the membrane as a helical segment. Over 516–555 (ETKGKALPETIEEAENMQRPRKNKEKMIYLQVQKLDIPLN) the chain is Cytoplasmic.

The protein belongs to the major facilitator (TC 2.A.1) superfamily. Organic cation transporter (TC 2.A.1.19) family. In terms of processing, tyrosine phosphorylated.

It localises to the basolateral cell membrane. The protein localises to the basal cell membrane. The protein resides in the apical cell membrane. The catalysed reaction is (R)-noradrenaline(out) = (R)-noradrenaline(in). It catalyses the reaction (R)-adrenaline(out) = (R)-adrenaline(in). It carries out the reaction serotonin(out) = serotonin(in). The enzyme catalyses dopamine(out) = dopamine(in). The catalysed reaction is histamine(out) = histamine(in). It catalyses the reaction thiamine(in) = thiamine(out). It carries out the reaction creatinine(in) = creatinine(out). The enzyme catalyses 1-methylnicotinamide(out) = 1-methylnicotinamide(in). The catalysed reaction is guanidine(out) = guanidine(in). It catalyses the reaction choline(out) = choline(in). It carries out the reaction agmatine(out) = agmatine(in). The enzyme catalyses putrescine(out) = putrescine(in). The catalysed reaction is spermidine(in) = spermidine(out). It catalyses the reaction tyramine(in) = tyramine(out). It carries out the reaction L-histidyl-L-proline diketopiperazine(in) = L-histidyl-L-proline diketopiperazine(out). The enzyme catalyses (R)-salsolinol(in) = (R)-salsolinol(out). The catalysed reaction is N-methyl-(R)-salsolinol(in) = N-methyl-(R)-salsolinol(out). It catalyses the reaction acetylcholine(in) = acetylcholine(out). It carries out the reaction prostaglandin F2alpha(out) = prostaglandin F2alpha(in). The enzyme catalyses prostaglandin E2(out) = prostaglandin E2(in). Its activity is regulated as follows. Tyrosine phosphorylation of the transporter leads to activation of the transport activity. Inhibited by cGMP, most likely through a cGMP-binding protein that interacts with OCT2. In terms of biological role, electrogenic voltage-dependent transporter that mediates the transport of a variety of organic cations such as endogenous bioactive amines, cationic drugs and xenobiotics. Functions as a Na(+)-independent, bidirectional uniporter. Cation cellular uptake or release is driven by the electrochemical potential, i.e. membrane potential and concentration gradient. However, may also engage electroneutral cation exchange when saturating concentrations of cation substrates are reached. Predominantly expressed at the basolateral membrane of hepatocytes and proximal tubules and involved in the uptake and disposition of cationic compounds by hepatic and renal clearance from the blood flow. Implicated in monoamine neurotransmitters uptake such as histamine, dopamine, adrenaline/epinephrine, noradrenaline/norepinephrine, serotonin and tyramine, thereby supporting a physiological role in the central nervous system by regulating interstitial concentrations of neurotransmitters. Also capable of transporting dopaminergic neuromodulators cyclo(his-pro), salsolinol and N-methyl-salsolinol, thereby involved in the maintenance of dopaminergic cell integrity in the central nervous system. Mediates the bidirectional transport of acetylcholine (ACh) at the apical membrane of ciliated cell in airway epithelium, thereby playing a role in luminal release of ACh from bronchial epithelium. Also transports guanidine and endogenous monoamines such as vitamin B1/thiamine, creatinine and N-1-methylnicotinamide (NMN). Mediates the uptake and efflux of quaternary ammonium compound choline. Mediates the bidirectional transport of polyamine agmatine and the uptake of polyamines putrescine and spermidine. Able to transport non-amine endogenous compounds such as prostaglandin E2 (PGE2) and prostaglandin F2-alpha (PGF2-alpha). Also involved in the uptake of xenobiotic 4-(4-(dimethylamino)styryl)-N-methylpyridinium (ASP). May contribute to regulate the transport of organic compounds in testis across the blood-testis-barrier. The protein is Solute carrier family 22 member 2 (SLC22A2) of Pongo abelii (Sumatran orangutan).